A 188-amino-acid chain; its full sequence is Peptidyl-prolyl cis-trans isomerase (188 aa).

The first 20 residues, 1–20 (MLKRVAIVLGGLLISAHALA), serve as a signal peptide directing secretion. Residues 21–181 (NTMVEMKTNL…QPVKIISVQI (161 aa)) enclose the PPIase cyclophilin-type domain.

This sequence belongs to the cyclophilin-type PPIase family.

It is found in the periplasm. The enzyme catalyses [protein]-peptidylproline (omega=180) = [protein]-peptidylproline (omega=0). PPIases accelerate the folding of proteins. It catalyzes the cis-trans isomerization of proline imidic peptide bonds in oligopeptides. This protein is not essential for growth. Presumably plays a role in signal transduction. This is Peptidyl-prolyl cis-trans isomerase (rotA) from Acinetobacter baylyi (strain ATCC 33305 / BD413 / ADP1).